The primary structure comprises 334 residues: GTPase Obg (334 aa).

The Obg domain occupies 1-159 (MKFVDSASVR…REIGLELSVM (159 aa)). The region spanning 160-332 (ADIGLLGIPN…LVAGLFKLVL (173 aa)) is the OBG-type G domain. GTP is bound by residues 166–173 (GIPNAGKS), 191–195 (FTTLH), 212–215 (DIPG), 282–285 (NKID), and 313–315 (SAL). 2 residues coordinate Mg(2+): S173 and T193.

It belongs to the TRAFAC class OBG-HflX-like GTPase superfamily. OBG GTPase family. As to quaternary structure, monomer. It depends on Mg(2+) as a cofactor.

Its subcellular location is the cytoplasm. Functionally, an essential GTPase which binds GTP, GDP and possibly (p)ppGpp with moderate affinity, with high nucleotide exchange rates and a fairly low GTP hydrolysis rate. Plays a role in control of the cell cycle, stress response, ribosome biogenesis and in those bacteria that undergo differentiation, in morphogenesis control. This chain is GTPase Obg, found in Vesicomyosocius okutanii subsp. Calyptogena okutanii (strain HA).